A 281-amino-acid polypeptide reads, in one-letter code: 2-dehydro-3-deoxyphosphooctonate aldolase (281 aa).

Belongs to the KdsA family.

It localises to the cytoplasm. The enzyme catalyses D-arabinose 5-phosphate + phosphoenolpyruvate + H2O = 3-deoxy-alpha-D-manno-2-octulosonate-8-phosphate + phosphate. Its pathway is carbohydrate biosynthesis; 3-deoxy-D-manno-octulosonate biosynthesis; 3-deoxy-D-manno-octulosonate from D-ribulose 5-phosphate: step 2/3. It participates in bacterial outer membrane biogenesis; lipopolysaccharide biosynthesis. This is 2-dehydro-3-deoxyphosphooctonate aldolase from Ectopseudomonas mendocina (strain ymp) (Pseudomonas mendocina).